The chain runs to 245 residues: Triosephosphate isomerase (245 aa).

4–6 provides a ligand contact to substrate; that stretch reads NWK. The Electrophile role is filled by His-91. The active-site Proton acceptor is Glu-161. Substrate is bound by residues Gly-167, Ser-207, and 228-229; that span reads GG.

This sequence belongs to the triosephosphate isomerase family. Homodimer.

It is found in the cytoplasm. The enzyme catalyses D-glyceraldehyde 3-phosphate = dihydroxyacetone phosphate. It functions in the pathway carbohydrate biosynthesis; gluconeogenesis. Its pathway is carbohydrate degradation; glycolysis; D-glyceraldehyde 3-phosphate from glycerone phosphate: step 1/1. In terms of biological role, involved in the gluconeogenesis. Catalyzes stereospecifically the conversion of dihydroxyacetone phosphate (DHAP) to D-glyceraldehyde-3-phosphate (G3P). This chain is Triosephosphate isomerase, found in Chlorobaculum tepidum (strain ATCC 49652 / DSM 12025 / NBRC 103806 / TLS) (Chlorobium tepidum).